Reading from the N-terminus, the 437-residue chain is Elongation factor 1-gamma (437 aa).

Ala-2 bears the N-acetylalanine mark. The GST N-terminal domain occupies 2 to 87 (AAGTLYTYPE…YVSNEELRGS (86 aa)). A GST C-terminal domain is found at 88–216 (TPEAAAQVVQ…VKLCEKMAQF (129 aa)). 2 positions are modified to N6-acetyllysine: Lys-147 and Lys-212. Over residues 221–254 (FAETQPKKDTPRKEKGSREEKQKPQAERKEEKKA) the composition is skewed to basic and acidic residues. The interval 221-268 (FAETQPKKDTPRKEKGSREEKQKPQAERKEEKKAAAPAPEEEMDECEQ) is disordered. Lys-253 participates in a covalent cross-link: Glycyl lysine isopeptide (Lys-Gly) (interchain with G-Cter in SUMO1). Positions 276–437 (AKDPFAHLPK…KAFNQGKIFK (162 aa)) constitute an EF-1-gamma C-terminal domain. Lys-285 participates in a covalent cross-link: Glycyl lysine isopeptide (Lys-Gly) (interchain with G-Cter in SUMO2). Position 401 is an N6-acetyllysine (Lys-401). Lys-434 carries the post-translational modification N6-acetyllysine; alternate. An N6-malonyllysine; alternate modification is found at Lys-434.

As to quaternary structure, EF-1 is composed of four subunits: alpha, beta, delta, and gamma. Highly expressed in pancreatic tumor tissue and to a lesser extent in normal kidney, intestine, pancreas, stomach, lung, brain, spleen and liver.

In terms of biological role, probably plays a role in anchoring the complex to other cellular components. In Homo sapiens (Human), this protein is Elongation factor 1-gamma (EEF1G).